The primary structure comprises 283 residues: Thymidylate synthase (283 aa).

Arg-21 provides a ligand contact to dUMP. Position 51 (His-51) interacts with (6R)-5,10-methylene-5,6,7,8-tetrahydrofolate. 123-124 (RR) is a binding site for dUMP. Cys-156 acts as the Nucleophile in catalysis. Residues 185-188 (RSAD), Asn-196, and 226-228 (HIY) contribute to the dUMP site. Asp-188 contributes to the (6R)-5,10-methylene-5,6,7,8-tetrahydrofolate binding site. Ala-282 is a binding site for (6R)-5,10-methylene-5,6,7,8-tetrahydrofolate.

This sequence belongs to the thymidylate synthase family. Bacterial-type ThyA subfamily. In terms of assembly, homodimer.

It localises to the cytoplasm. It carries out the reaction dUMP + (6R)-5,10-methylene-5,6,7,8-tetrahydrofolate = 7,8-dihydrofolate + dTMP. It participates in pyrimidine metabolism; dTTP biosynthesis. Functionally, catalyzes the reductive methylation of 2'-deoxyuridine-5'-monophosphate (dUMP) to 2'-deoxythymidine-5'-monophosphate (dTMP) while utilizing 5,10-methylenetetrahydrofolate (mTHF) as the methyl donor and reductant in the reaction, yielding dihydrofolate (DHF) as a by-product. This enzymatic reaction provides an intracellular de novo source of dTMP, an essential precursor for DNA biosynthesis. The polypeptide is Thymidylate synthase (Flavobacterium johnsoniae (strain ATCC 17061 / DSM 2064 / JCM 8514 / BCRC 14874 / CCUG 350202 / NBRC 14942 / NCIMB 11054 / UW101) (Cytophaga johnsonae)).